The primary structure comprises 764 residues: 5-methyltetrahydropteroyltriglutamate--homocysteine methyltransferase (764 aa).

5-methyltetrahydropteroyltri-L-glutamate is bound by residues R16–K19 and K115. L-homocysteine-binding positions include I435–S437 and E488. L-methionine is bound by residues I435 to S437 and E488. 5-methyltetrahydropteroyltri-L-glutamate contacts are provided by residues R519 to C520 and W565. D603 provides a ligand contact to L-homocysteine. D603 is an L-methionine binding site. E609 serves as a coordination point for 5-methyltetrahydropteroyltri-L-glutamate. The Zn(2+) site is built by H645, C647, and E669. The Proton donor role is filled by H698. C730 is a Zn(2+) binding site.

This sequence belongs to the vitamin-B12 independent methionine synthase family. It depends on Zn(2+) as a cofactor.

It catalyses the reaction 5-methyltetrahydropteroyltri-L-glutamate + L-homocysteine = tetrahydropteroyltri-L-glutamate + L-methionine. The protein operates within amino-acid biosynthesis; L-methionine biosynthesis via de novo pathway; L-methionine from L-homocysteine (MetE route): step 1/1. Catalyzes the transfer of a methyl group from 5-methyltetrahydrofolate to homocysteine resulting in methionine formation. The protein is 5-methyltetrahydropteroyltriglutamate--homocysteine methyltransferase of Burkholderia pseudomallei (strain 1106a).